Here is a 691-residue protein sequence, read N- to C-terminus: Elongation factor G (691 aa).

Residues 6 to 281 form the tr-type G domain; the sequence is SRYRNIGIMA…GVVDFLPSPI (276 aa). Residues 15–22, 79–83, and 133–136 each bind GTP; these read AHIDAGKT, DTPGH, and NKMD.

It belongs to the TRAFAC class translation factor GTPase superfamily. Classic translation factor GTPase family. EF-G/EF-2 subfamily.

It localises to the cytoplasm. Catalyzes the GTP-dependent ribosomal translocation step during translation elongation. During this step, the ribosome changes from the pre-translocational (PRE) to the post-translocational (POST) state as the newly formed A-site-bound peptidyl-tRNA and P-site-bound deacylated tRNA move to the P and E sites, respectively. Catalyzes the coordinated movement of the two tRNA molecules, the mRNA and conformational changes in the ribosome. The sequence is that of Elongation factor G from Wolbachia pipientis subsp. Culex pipiens (strain wPip).